The primary structure comprises 150 residues: 3-dehydroquinate dehydratase (150 aa).

Tyr26 serves as the catalytic Proton acceptor. Residues Asn77, His83, and Asp90 each coordinate substrate. The Proton donor role is filled by His103. Substrate contacts are provided by residues 104-105 (LS) and Arg114.

It belongs to the type-II 3-dehydroquinase family. Homododecamer.

It catalyses the reaction 3-dehydroquinate = 3-dehydroshikimate + H2O. The protein operates within metabolic intermediate biosynthesis; chorismate biosynthesis; chorismate from D-erythrose 4-phosphate and phosphoenolpyruvate: step 3/7. Its function is as follows. Catalyzes a trans-dehydration via an enolate intermediate. This Yersinia pseudotuberculosis serotype O:1b (strain IP 31758) protein is 3-dehydroquinate dehydratase.